The following is a 964-amino-acid chain: Phosphoenolpyruvate carboxylase (964 aa).

Residue serine 11 is modified to Phosphoserine. Active-site residues include histidine 172 and lysine 600.

It belongs to the PEPCase type 1 family. In terms of assembly, homotetramer. Mg(2+) serves as cofactor.

It is found in the cytoplasm. It catalyses the reaction oxaloacetate + phosphate = phosphoenolpyruvate + hydrogencarbonate. Its pathway is photosynthesis; C4 acid pathway. By light-reversible phosphorylation. In terms of biological role, through the carboxylation of phosphoenolpyruvate (PEP) it forms oxaloacetate, a four-carbon dicarboxylic acid source for the tricarboxylic acid cycle. This is Phosphoenolpyruvate carboxylase (PPC) from Nicotiana tabacum (Common tobacco).